The primary structure comprises 294 residues: Flavin-dependent thymidylate synthase (294 aa).

Residues 27-250 enclose the ThyX domain; it reads GFIRVIDYMG…PFVYEAFEEY (224 aa). FAD-binding positions include T73, 96–98, and E104; that span reads RHR. Residues 93–96, 104–108, and R189 each bind dUMP; these read QWIR and EYSAR. Residues 96-106 carry the ThyX motif motif; it reads RHRTASVNEYS. FAD is bound by residues 205–207 and H211; that span reads NLH. R216 lines the dUMP pocket. Catalysis depends on R216, which acts as the Involved in ionization of N3 of dUMP, leading to its activation.

This sequence belongs to the thymidylate synthase ThyX family. In terms of assembly, homotetramer. Requires FAD as cofactor.

It catalyses the reaction dUMP + (6R)-5,10-methylene-5,6,7,8-tetrahydrofolate + NADPH + H(+) = dTMP + (6S)-5,6,7,8-tetrahydrofolate + NADP(+). It participates in pyrimidine metabolism; dTTP biosynthesis. In terms of biological role, catalyzes the reductive methylation of 2'-deoxyuridine-5'-monophosphate (dUMP) to 2'-deoxythymidine-5'-monophosphate (dTMP) while utilizing 5,10-methylenetetrahydrofolate (mTHF) as the methyl donor, and NADPH and FADH(2) as the reductant. This chain is Flavin-dependent thymidylate synthase, found in Rickettsia conorii (strain ATCC VR-613 / Malish 7).